We begin with the raw amino-acid sequence, 429 residues long: Bifunctional protein GlmU (429 aa).

Positions M1–K223 are pyrophosphorylase. Residues L8–G11, K22, and G81–T82 contribute to the UDP-N-acetyl-alpha-D-glucosamine site. D102 serves as a coordination point for Mg(2+). The UDP-N-acetyl-alpha-D-glucosamine site is built by G135, E149, N164, and N221. Residue N221 coordinates Mg(2+). The interval F224–Q244 is linker. Positions G245–K429 are N-acetyltransferase. UDP-N-acetyl-alpha-D-glucosamine is bound by residues R308 and K325. The Proton acceptor role is filled by H336. 2 residues coordinate UDP-N-acetyl-alpha-D-glucosamine: Y339 and N350. Acetyl-CoA is bound by residues N359–Y360, S378, A396, and R413.

The protein in the N-terminal section; belongs to the N-acetylglucosamine-1-phosphate uridyltransferase family. It in the C-terminal section; belongs to the transferase hexapeptide repeat family. Homotrimer. The cofactor is Mg(2+).

It is found in the cytoplasm. The catalysed reaction is alpha-D-glucosamine 1-phosphate + acetyl-CoA = N-acetyl-alpha-D-glucosamine 1-phosphate + CoA + H(+). It carries out the reaction N-acetyl-alpha-D-glucosamine 1-phosphate + UTP + H(+) = UDP-N-acetyl-alpha-D-glucosamine + diphosphate. It participates in nucleotide-sugar biosynthesis; UDP-N-acetyl-alpha-D-glucosamine biosynthesis; N-acetyl-alpha-D-glucosamine 1-phosphate from alpha-D-glucosamine 6-phosphate (route II): step 2/2. Its pathway is nucleotide-sugar biosynthesis; UDP-N-acetyl-alpha-D-glucosamine biosynthesis; UDP-N-acetyl-alpha-D-glucosamine from N-acetyl-alpha-D-glucosamine 1-phosphate: step 1/1. The protein operates within bacterial outer membrane biogenesis; LPS lipid A biosynthesis. Functionally, catalyzes the last two sequential reactions in the de novo biosynthetic pathway for UDP-N-acetylglucosamine (UDP-GlcNAc). The C-terminal domain catalyzes the transfer of acetyl group from acetyl coenzyme A to glucosamine-1-phosphate (GlcN-1-P) to produce N-acetylglucosamine-1-phosphate (GlcNAc-1-P), which is converted into UDP-GlcNAc by the transfer of uridine 5-monophosphate (from uridine 5-triphosphate), a reaction catalyzed by the N-terminal domain. This is Bifunctional protein GlmU from Campylobacter jejuni subsp. jejuni serotype O:23/36 (strain 81-176).